We begin with the raw amino-acid sequence, 138 residues long: Endoribonuclease YbeY (138 aa).

Positions 105, 109, and 115 each coordinate Zn(2+).

Belongs to the endoribonuclease YbeY family. Zn(2+) serves as cofactor.

It is found in the cytoplasm. Its function is as follows. Single strand-specific metallo-endoribonuclease involved in late-stage 70S ribosome quality control and in maturation of the 3' terminus of the 16S rRNA. The chain is Endoribonuclease YbeY from Chlorobium phaeobacteroides (strain BS1).